The primary structure comprises 442 residues: Cell cycle checkpoint control protein RAD9B (442 aa).

Disordered regions lie at residues 370–392 and 422–442; these read EVPE…TEDV and QSLA…FSTF. Ser-387 carries the phosphoserine modification.

The protein belongs to the rad9 family. Interacts with HUS1, HUS1B, RAD1, RAD9A and RAD17.

This is Cell cycle checkpoint control protein RAD9B (RAD9B) from Bos taurus (Bovine).